The chain runs to 455 residues: Kynurenine 3-monooxygenase (455 aa).

This sequence belongs to the aromatic-ring hydroxylase family. KMO subfamily. FAD serves as cofactor.

It catalyses the reaction L-kynurenine + NADPH + O2 + H(+) = 3-hydroxy-L-kynurenine + NADP(+) + H2O. It functions in the pathway cofactor biosynthesis; NAD(+) biosynthesis; quinolinate from L-kynurenine: step 1/3. In terms of biological role, catalyzes the hydroxylation of L-kynurenine (L-Kyn) to form 3-hydroxy-L-kynurenine (L-3OHKyn). Required for synthesis of quinolinic acid. The polypeptide is Kynurenine 3-monooxygenase (Xanthomonas axonopodis pv. citri (strain 306)).